A 240-amino-acid polypeptide reads, in one-letter code: MAVPGVRLLTGALRKPDAWTRLWGVIQGTSSHKLCASWNRYLYFSSTKLNTSNYKTLFRNIFSLRLPELLVSPECYFPFSIRLKSNINSKKSTKKTLQKEADEEDSDEETSYPERSEQEEELESEPGVAKDYKDLEKVVQSFRYDVILKTGLDVGRNKVEDAFYKGELRLNGEKLWKKSRTVKVGDTLDLITGENKETGTEVVMRILLKKVYEEKTENDKHRVVLRRWKSLKLPKKTLSK.

The N-terminal 83 residues, 1-83 (MAVPGVRLLT…ECYFPFSIRL (83 aa)), are a transit peptide targeting the mitochondrion. The disordered stretch occupies residues 92-127 (STKKTLQKEADEEDSDEETSYPERSEQEEELESEPG). Residues 101–124 (ADEEDSDEETSYPERSEQEEELES) are compositionally biased toward acidic residues. 2 positions are modified to phosphoserine: Ser106 and Ser116. In terms of domain architecture, S4 RNA-binding spans 142-217 (FRYDVILKTG…LKKVYEEKTE (76 aa)).

As to quaternary structure, monomer. Interacts with POLRMT. Interacts (via S4 domain) with MTRFR (via C-terminus). Associates with mitoribosomal S39 large subunit, peptidyl tRNA and nascent chain.

It is found in the mitochondrion matrix. Its function is as follows. Mitochondrial RNA-binding protein involved in mitochondrial transcription regulation. Functions as a protective factor to maintain proper mitochondrial RNA level during stress. Acts at the transcription level and its protective function depends on its RNA binding ability. Part of a mitoribosome-associated quality control pathway that prevents aberrant translation by responding to interruptions during elongation. As heterodimer with MTRF, ejects the unfinished nascent chain and peptidyl transfer RNA (tRNA), respectively, from stalled ribosomes. Recruitment of mitoribosome biogenesis factors to these quality control intermediates suggests additional roles for MTRES1 and MTRF during mitoribosome rescue. The sequence is that of Mitochondrial transcription rescue factor 1 (Mtres1) from Mus musculus (Mouse).